We begin with the raw amino-acid sequence, 1129 residues long: Protein LANA1 (1129 aa).

Disordered stretches follow at residues 1 to 988 (MAPP…PVPY) and 1110 to 1129 (LPLT…QEMT). 2 stretches are compositionally biased toward basic and acidic residues: residues 28–41 (RSPE…DLHL) and 48–58 (VADSVDGRECG). Pro residues predominate over residues 85–104 (PVAPIPSPAPATPLPPPALL). The segment covering 139–156 (SPESSQRPPLSSPTGRPD) has biased composition (polar residues). The span at 161–185 (MRPPPSQQTTPPHSPTTPPPEPPSK) shows a compositional bias: pro residues. The segment covering 186–197 (SSPDSLAPSTLR) has biased composition (low complexity). Positions 207–217 (PQGPSTLNPIC) are enriched in polar residues. Low complexity predominate over residues 263–275 (PISIGSSSPSEGS). Composition is skewed to basic and acidic residues over residues 292 to 301 (EASKNEKECS) and 314 to 323 (EISKESQVDK). Over residues 324–419 (DDNDNKDDEE…DKKEDEEDGG (96 aa)) the composition is skewed to acidic residues. A compositionally biased stretch (low complexity) spans 431–471 (QQQQEPQQQEPQQQEPQQQEPQQQEPQQQEPQQQEPQQQEP). The span at 472 to 528 (QQREPQQREPQQREPQQREPQQREPQQREPQQREPQQREPQQREPQQREPQQREPQQ) shows a compositional bias: basic and acidic residues. A compositionally biased stretch (low complexity) spans 529–596 (REPQQQEPQQ…QQQEPQQQDE (68 aa)). A compositionally biased stretch (acidic residues) spans 597-888 (QQQDEQQQDE…QELEEVEEQE (292 aa)). A compositionally biased stretch (polar residues) spans 924–934 (THEQIASSPPG). The span at 962 to 979 (PGVRMRRVPVTHPKKPHP) shows a compositional bias: basic residues. The tract at residues 1008–1129 (FLGKDGRRDP…GPGDSPQEMT (122 aa)) is DNA-binding domain.

In terms of assembly, homooligomer. Interacts with host BRD2. Interacts with host RELA, ELOB, ELOC and CUL5; these interactions induce the proteasomal degradation of host RELA. Interacts with host TRIM28 and NFE2L2/NRF2; these interactions are essential for the shutdown of lytic gene expression during the early stage of infection. Interacts (via N-terminus) with host histones H2A and H2B; these interactions are essential to dock LANA1 onto chromosomes. Interacts with host BUB1 and PCNA. Interacts with host NAP1L1; this interaction is required for LANA1-dependent DNA replication. Interacts with components of the host MLL1 complex KMT2A and WDR5.

The protein resides in the host nucleus. Functionally, multifunctional protein that plays a role in the replication and long-term persistence of the viral episomal genome in dividing cells. Binds to mitotic chromosomes via its N-terminal region and to a 16-bp imperfect palindrome within the origin of replication (oriP) located in the viral terminal repeat (TR) through its C-terminal. Tethers viral episomes to chromosomes during mitosis. Plays a critical role in the shutdown of lytic gene expression during the early stage of infection by interacting with host TRIM28. Also plays a role in the repression of host NF-kappa-B activity upon TNF-alpha stimulation by promoting the proteasomal degradation of host RELA. Promotes nuclear localization and cleavage of host STAT6 leading to constitutive activation of the IL13/STAT6 signaling pathway to promote viral latency. Interacts with and modulates the histone methyltransferase MLL1 complex activity, leading to its recruitment on viral DNA terminal repeats changing the dynamic of histone H3 methylated 'Lys-4'(H3K4me) profile during the initial hours following infection. The sequence is that of Protein LANA1 (LANA1) from Homo sapiens (Human).